The following is a 358-amino-acid chain: 3-isopropylmalate dehydrogenase (358 aa).

Substrate is bound by residues Arg-92, Arg-102, Arg-130, and Asp-224. Mg(2+)-binding residues include Asp-224, Asp-248, and Asp-252. NAD(+) is bound at residue 282 to 294; it reads GSAPDIAGQGIAN.

The protein belongs to the isocitrate and isopropylmalate dehydrogenases family. LeuB type 1 subfamily. As to quaternary structure, homodimer. It depends on Mg(2+) as a cofactor. The cofactor is Mn(2+).

The protein localises to the cytoplasm. It carries out the reaction (2R,3S)-3-isopropylmalate + NAD(+) = 4-methyl-2-oxopentanoate + CO2 + NADH. It participates in amino-acid biosynthesis; L-leucine biosynthesis; L-leucine from 3-methyl-2-oxobutanoate: step 3/4. Catalyzes the oxidation of 3-carboxy-2-hydroxy-4-methylpentanoate (3-isopropylmalate) to 3-carboxy-4-methyl-2-oxopentanoate. The product decarboxylates to 4-methyl-2 oxopentanoate. This is 3-isopropylmalate dehydrogenase from Bordetella pertussis (strain Tohama I / ATCC BAA-589 / NCTC 13251).